A 413-amino-acid polypeptide reads, in one-letter code: uncharacterized protein (413 aa).

Residues arginine 2 to glutamate 129 form the Response regulatory domain. 4-aspartylphosphate is present on aspartate 54.

This is an uncharacterized protein from Sinorhizobium fredii (strain NBRC 101917 / NGR234).